The sequence spans 8797 residues: Nesprin-1 (8797 aa).

Residues 1–289 are actin-binding; sequence MATSRGASRC…KHYPDIHNAS (289 aa). Topologically, residues 1-8746 are cytoplasmic; sequence MATSRGASRC…GRGFLFRVLR (8746 aa). 2 Calponin-homology (CH) domains span residues 27-134 and 178-283; these read IVQK…LYFQ and GNAK…KHYP. 52 Spectrin repeats span residues 314-397, 398-502, 503-609, 610-703, 704-815, 816-923, 924-1024, 1025-1122, 1123-1246, 1247-1335, 1336-1444, 1445-1550, 1551-1653, 1654-1763, 1764-1879, 1880-1976, 1977-2081, 2082-2195, 2196-2303, 2304-2401, 2402-2513, 2514-2619, 2620-2731, 2732-2838, 2839-2962, 2963-3062, 3063-3171, 3172-3275, 3276-3387, 3388-3490, 3491-3593, 3594-3720, 3721-3814, 3815-3920, 3921-4028, 4029-4139, 4140-4235, 4236-4339, 4340-4451, 4452-4560, 4561-4669, 4670-4776, 4777-4882, 4883-4991, 4992-5099, 5100-5209, 5210-5318, 5319-5424, 5425-5522, 5523-5630, 5631-5736, and 5737-5842; these read REDR…SRLF, DWHI…HLMK, MEFL…SMLE, EVIS…YAQA, DEMD…QLLI, PLEE…KHVE, TNSR…HLKI, DVEK…LMED, PDKW…NSLE, ELIS…ERRI, QVTL…MEMV, KTKW…ILGH, LSQQ…LENL, LAHW…LQSV, VAEH…SHAS, LSGI…ADAL, AVLK…QGQC, CGLI…LRVS, LSIW…KDFT, AQST…KTQA, SLQE…LQDC, ASEL…LRSC, QVAL…LESV, ISQW…VEEI, VKDH…SGQV, AQLE…QNKE, QILQ…LENL, KIQM…VSRL, DRIV…LEGA, LSKW…SEKL, VRLH…RTQF, NNVV…YSDW, YGST…LEKG, LHLA…LEAK, VKDH…QRMY, QSLE…KHLK, SELW…REED, LQRT…IQVS, VTNL…LNKA, LSEK…LEKN, LVSR…VQEA, ILAR…LEDT, TSAY…CESR, MVQS…LTEI, YSQC…LQRC, TAQW…LEDA, VDEW…GKLV, KQEL…EQSK, ATSQ…LSKL, NQAA…LQDA, AKDM…MQEA, and VVQY…PSAH. Positions 314–8666 form a coiled coil; the sequence is REDRVIFKEM…EKLLDVSSSQ (8353 aa). A Phosphoserine modification is found at serine 732. Threonine 2270 is subject to Phosphothreonine. Serine 5657 bears the Phosphoserine mark. The tract at residues 5859-5886 is disordered; it reads PVTEESGEEGTNSEISSPPACRSPSPVA. Spectrin repeat units follow at residues 5962-6071, 6072-6178, 6374-6485, 6486-6581, 6582-6691, 6692-6795, 6796-6902, 6903-7020, 7021-7128, 7129-7237, 7238-7350, 7351-7454, 7455-7558, 7559-7671, 7672-7783, 7784-7883, 7884-7997, 7998-8106, and 8107-8216; these read LERQ…LEEK, LNDQ…SLLE, RQSI…RLQQ, ILNF…RSGL, NQNL…LETW, SHLD…TILK, HWTR…QEKL, HQLQ…LEGL, LESW…LKSV, LDQW…SKAL, LQLW…LQAG, VLDY…LQSF, LLQH…RGII, DSQI…LAFL, LKDW…NEWA, VFSE…LKET, LVAV…IEET, WRLW…LKHF, and IGQR…LPLP. The residue at position 8223 (serine 8223) is a Phosphoserine. Positions 8246-8279 are disordered; the sequence is DSLLSPQPSSNLSLSLAQPLRSERSGRDTPASVD. The span at 8247-8265 shows a compositional bias: low complexity; it reads SLLSPQPSSNLSLSLAQPL. Threonine 8274 carries the post-translational modification Phosphothreonine. Serine 8277, serine 8280, and serine 8305 each carry phosphoserine. 3 Spectrin repeats span residues 8329-8438, 8439-8548, and 8549-8666; these read SALE…MKQN, LQKW…LQDA, and LMQC…SSSQ. Threonine 8360 carries the phosphothreonine modification. The interval 8671-8734 is disordered; the sequence is SWSSADELDT…DSSLSEPGPG (64 aa). Polar residues-rich tracts occupy residues 8680–8696 and 8704–8729; these read TSGSVSPTSGRSTPNRQ and SLSQPGPSVSSPHSRSTKGGSDSSLS. Positions 8738–8797 constitute a KASH domain; that stretch reads RGFLFRVLRAALPLQLLLLLLIGLACLVPMSEEDYSCALSNNFARSFHPMLRYTNGPPPL. Residues 8747 to 8767 traverse the membrane as a helical; Anchor for type IV membrane protein segment; it reads AALPLQLLLLLLIGLACLVPM. Topologically, residues 8768–8797 are perinuclear space; it reads SEEDYSCALSNNFARSFHPMLRYTNGPPPL.

Belongs to the nesprin family. Core component of LINC complexes which are composed of inner nuclear membrane SUN domain-containing proteins coupled to outer nuclear membrane KASH domain-containing nesprins. SUN and KASH domain-containing proteins seem to bind each other promiscuously; however, differentially expression of LINC complex constituents can give rise to specific assemblies. At least SUN1/2-containing core LINC complexes are proposed to be hexameric composed of three protomers of each KASH and SUN domain-containing protein. The SUN2:SYNE1/KASH1 LINC complex is a heterohexamer; the homotrimeric cloverleave-like conformation of the SUN domain is a prerequisite for LINC complex formation in which three separate SYNE1/KASH1 peptides bind at the interface of adjacent SUN domains. Self-associates. Interacts with SYNE3. Interacts with SPAG4/SUN4. May interact with MUSK. Interacts with F-actin via its N-terminal domain. Interacts with EMD and LMNA in vitro. Interacts (via KASH domain) with TMEM258. In terms of processing, the disulfid bond with SUN1 or SUN2 is required for stability of the respective LINC complex under tensile forces. In terms of tissue distribution, expressed in HeLa, A431, A172 and HaCaT cells (at protein level). Widely expressed. Highly expressed in skeletal and smooth muscles, heart, spleen, peripheral blood leukocytes, pancreas, cerebellum, stomach, kidney and placenta. Isoform GSRP-56 is predominantly expressed in heart and skeletal muscle (at protein level).

Its subcellular location is the nucleus outer membrane. The protein localises to the nucleus. The protein resides in the nucleus envelope. It localises to the cytoplasm. It is found in the cytoskeleton. Its subcellular location is the myofibril. The protein localises to the sarcomere. The protein resides in the golgi apparatus. Its function is as follows. Multi-isomeric modular protein which forms a linking network between organelles and the actin cytoskeleton to maintain the subcellular spatial organization. As a component of the LINC (LInker of Nucleoskeleton and Cytoskeleton) complex involved in the connection between the nuclear lamina and the cytoskeleton. The nucleocytoplasmic interactions established by the LINC complex play an important role in the transmission of mechanical forces across the nuclear envelope and in nuclear movement and positioning. May be involved in nucleus-centrosome attachment and nuclear migration in neural progenitors implicating LINC complex association with SUN1/2 and probably association with cytoplasmic dynein-dynactin motor complexes; SYNE1 and SYNE2 may act redundantly. Required for centrosome migration to the apical cell surface during early ciliogenesis. May be involved in nuclear remodeling during sperm head formation in spermatogenesis; a probable SUN3:SYNE1/KASH1 LINC complex may tether spermatid nuclei to posterior cytoskeletal structures such as the manchette. This is Nesprin-1 from Homo sapiens (Human).